A 344-amino-acid polypeptide reads, in one-letter code: Arginine N-succinyltransferase (344 aa).

L125 contacts succinyl-CoA. The active-site Proton donor is H229.

The protein belongs to the arginine N-succinyltransferase family.

It carries out the reaction succinyl-CoA + L-arginine = N(2)-succinyl-L-arginine + CoA + H(+). It participates in amino-acid degradation; L-arginine degradation via AST pathway; L-glutamate and succinate from L-arginine: step 1/5. In terms of biological role, catalyzes the transfer of succinyl-CoA to arginine to produce N(2)-succinylarginine. This Shigella flexneri protein is Arginine N-succinyltransferase.